The chain runs to 510 residues: Inositol-3-phosphate synthase (510 aa).

Residues Gly70, Gly71, Asn72, Asn73, Asp143, Ile180, Gln190, Arg193, Thr230, Ala231, Asn232, Thr233, Gly281, Ser282, Asp306, Ser309, Asn340, Asn341, Asp342, Lys355, Gly393, Asp394, Asp422, and Ser423 each coordinate NAD(+).

It belongs to the myo-inositol 1-phosphate synthase family. NAD(+) is required as a cofactor.

Its subcellular location is the cytoplasm. It localises to the cytosol. The protein localises to the nucleus. It catalyses the reaction D-glucose 6-phosphate = 1D-myo-inositol 3-phosphate. The protein operates within polyol metabolism; myo-inositol biosynthesis; myo-inositol from D-glucose 6-phosphate: step 1/2. Its function is as follows. Key enzyme in myo-inositol biosynthesis pathway that catalyzes the conversion of glucose 6-phosphate to 1-myo-inositol 1-phosphate in a NAD-dependent manner. This chain is Inositol-3-phosphate synthase (INPS1), found in Nicotiana paniculata.